The following is a 207-amino-acid chain: ATP synthase subunit a (207 aa).

6 consecutive transmembrane segments (helical) span residues Gln3–Ala23, Leu62–Leu82, Asn88–Ile108, Phe119–Leu139, Leu158–Ile178, and Leu180–Gly200.

Belongs to the ATPase A chain family. In terms of assembly, F-type ATPases have 2 components, CF(1) - the catalytic core - and CF(0) - the membrane proton channel. CF(1) has five subunits: alpha(3), beta(3), gamma(1), delta(1), epsilon(1). CF(0) has three main subunits: a(1), b(2) and c(9-12). The alpha and beta chains form an alternating ring which encloses part of the gamma chain. CF(1) is attached to CF(0) by a central stalk formed by the gamma and epsilon chains, while a peripheral stalk is formed by the delta and b chains.

The protein resides in the cell inner membrane. In terms of biological role, key component of the proton channel; it plays a direct role in the translocation of protons across the membrane. The chain is ATP synthase subunit a from Sulfurihydrogenibium sp. (strain YO3AOP1).